A 211-amino-acid chain; its full sequence is Peptide methionine sulfoxide reductase MsrA (211 aa).

Cysteine 60 is a catalytic residue.

Belongs to the MsrA Met sulfoxide reductase family.

The catalysed reaction is L-methionyl-[protein] + [thioredoxin]-disulfide + H2O = L-methionyl-(S)-S-oxide-[protein] + [thioredoxin]-dithiol. It catalyses the reaction [thioredoxin]-disulfide + L-methionine + H2O = L-methionine (S)-S-oxide + [thioredoxin]-dithiol. Its function is as follows. Has an important function as a repair enzyme for proteins that have been inactivated by oxidation. Catalyzes the reversible oxidation-reduction of methionine sulfoxide in proteins to methionine. The sequence is that of Peptide methionine sulfoxide reductase MsrA from Methanosarcina mazei (strain ATCC BAA-159 / DSM 3647 / Goe1 / Go1 / JCM 11833 / OCM 88) (Methanosarcina frisia).